The primary structure comprises 1369 residues: MAHFSCFPGALALSAFRQQRLLSTLKRIDPEIDAVSAQYLHFVAADAPLSADDAARVQALLTYGSPASAETEGDRFVVIPRFGTISPWASKATEIARHCALPQIHRIERGVEFTVTCKKGLLRGLTGGRKQLDEATRAAVAAHLHDRMTEIVVATREAGYGLFDVLPAKALRFVDLGSGDAAAGRGALEAANTEMGLALSDDEIDYLVDAYRKLGRNPTDVELMMFAQANSEHCRHKIFNADWTIDGETQDKSLFAMIRNTHQLAPQGTVVAYSDNAAVMEGGMAERWFPHAGTDGETGVPQYGRREALTHTLMKVETHNHPTAISPFPGASTGAGGEIRDEGATGRGAKPKAGLTGFTVSNLLLPEAVQSWENARDTAQPAAQRNPGDTAPGPVGKPDRIASPLQIMIEGPIGGAAFNNEFGRPNLGGYFRVYEQNVGGTVRGYHKPIMIAGGIGNIDAGHTHKHGLPAGTLLVQLGGPGMRIGMGGGAASSMATGTNTADLDFDSVQRGNPEMQRRAQEVINACWALGEDNPILSIHDVGAGGISNAFPELVDGADRGARFDLRQVHLEESGLSPAEIWCNESQERYTLAIAPGDFPRFQAMCERERAPFSVVGFATEEQQLQVVDGDAPADAVEHFPVNMPMDVLLGKPPRMHRDVRRVAQALPEVDVTGLDLETVARDVLRHPTVASKSFLITIGDRTVGGLNTRDQMVGPWQVPVADVAVTTLDYKGYAGEAMTMGERTPLAVIDAPASGRMAIGEAITNIAAAPIASLAQLKLSANWMAACGVDGEDARLYDTVKAVGMELCPALGISIPVGKDSLSMRTKWDDAGEAKEVVAPVSLIVSAFAPVTDVRKTLTPQLKPVASAGEAADTTLIVIDLGHGKHRLGGSILAQVTQQIGNSVPDVGDAEDLKRFFAAIQQLNAAGMLLAYHDRSDGGLWATVCEMAFAGHCGVSINVDMLTLDGAHASDYGDAKNWAQQVSGRRADMTLRALFAEELGAVIQVPAAQRDAVFAVLREHGLAACSHVIGAPNASGQIEIWRDAKKVFSAPRIELQRAWTDVSWRIASLRDNPECTQSEYDRLLDAEDPGISPNLTFDLAEDVAAPFIATGARPRMAILREQGVNSQVEMAYAMDKAGFDAYDVHMSDLLAGRTRLADFKGFVACGGFSYGDVLGAGEGWAKTILFNGMLAEQFAAFFNRADSIALGVCNGCQMMANLAPIIPGAGAWPKFTRNQSEQYEGRLVTVQVEASPSIFYAGMEGSRIPIVVAHGEGYADFSQQGDIGKVAVGLRYVDNRGEVTQTYPLNPNGSPQGIASVTTHDGRFTVLMPHPERVFRAVQMSWHPKDWAAAGDGSSPWMRMFRNARKQMG.

Disordered stretches follow at residues 321 to 352 (HPTAISPFPGASTGAGGEIRDEGATGRGAKPK) and 373 to 400 (ENARDTAQPAAQRNPGDTAPGPVGKPDR). 330 to 341 (GASTGAGGEIRD) lines the ATP pocket. ATP is bound at residue Ala721. Residues Asp722, Glu761, Asn765, and Asp934 each contribute to the Mg(2+) site. Position 936 (Ser936) interacts with ATP. Residues 1116–1369 (MAILREQGVN…MFRNARKQMG (254 aa)) enclose the Glutamine amidotransferase type-1 domain. Residue Cys1209 is the Nucleophile of the active site. Residues His1330 and Glu1332 contribute to the active site.

This sequence in the N-terminal section; belongs to the FGAMS family. As to quaternary structure, monomer.

It localises to the cytoplasm. It catalyses the reaction N(2)-formyl-N(1)-(5-phospho-beta-D-ribosyl)glycinamide + L-glutamine + ATP + H2O = 2-formamido-N(1)-(5-O-phospho-beta-D-ribosyl)acetamidine + L-glutamate + ADP + phosphate + H(+). It functions in the pathway purine metabolism; IMP biosynthesis via de novo pathway; 5-amino-1-(5-phospho-D-ribosyl)imidazole from N(2)-formyl-N(1)-(5-phospho-D-ribosyl)glycinamide: step 1/2. Phosphoribosylformylglycinamidine synthase involved in the purines biosynthetic pathway. Catalyzes the ATP-dependent conversion of formylglycinamide ribonucleotide (FGAR) and glutamine to yield formylglycinamidine ribonucleotide (FGAM) and glutamate. In Ralstonia nicotianae (strain ATCC BAA-1114 / GMI1000) (Ralstonia solanacearum), this protein is Phosphoribosylformylglycinamidine synthase.